Consider the following 308-residue polypeptide: Aspartate carbamoyltransferase catalytic subunit (308 aa).

Carbamoyl phosphate is bound by residues Arg57 and Thr58. Lys86 provides a ligand contact to L-aspartate. The carbamoyl phosphate site is built by Arg107, His135, and Gln138. The L-aspartate site is built by Arg168 and Arg228. Carbamoyl phosphate is bound by residues Leu267 and Pro268.

The protein belongs to the aspartate/ornithine carbamoyltransferase superfamily. ATCase family. Heterododecamer (2C3:3R2) of six catalytic PyrB chains organized as two trimers (C3), and six regulatory PyrI chains organized as three dimers (R2).

The catalysed reaction is carbamoyl phosphate + L-aspartate = N-carbamoyl-L-aspartate + phosphate + H(+). It participates in pyrimidine metabolism; UMP biosynthesis via de novo pathway; (S)-dihydroorotate from bicarbonate: step 2/3. In terms of biological role, catalyzes the condensation of carbamoyl phosphate and aspartate to form carbamoyl aspartate and inorganic phosphate, the committed step in the de novo pyrimidine nucleotide biosynthesis pathway. This chain is Aspartate carbamoyltransferase catalytic subunit, found in Leptospira interrogans serogroup Icterohaemorrhagiae serovar Lai (strain 56601).